Reading from the N-terminus, the 348-residue chain is Aspartate carbamoyltransferase catalytic subunit (348 aa).

2 residues coordinate carbamoyl phosphate: arginine 57 and threonine 58. L-aspartate is bound at residue lysine 86. The carbamoyl phosphate site is built by arginine 107, histidine 135, and glutamine 138. Residues arginine 172 and arginine 234 each contribute to the L-aspartate site. The carbamoyl phosphate site is built by leucine 274 and proline 275.

It belongs to the aspartate/ornithine carbamoyltransferase superfamily. ATCase family. As to quaternary structure, heterododecamer (2C3:3R2) of six catalytic PyrB chains organized as two trimers (C3), and six regulatory PyrI chains organized as three dimers (R2).

The catalysed reaction is carbamoyl phosphate + L-aspartate = N-carbamoyl-L-aspartate + phosphate + H(+). The protein operates within pyrimidine metabolism; UMP biosynthesis via de novo pathway; (S)-dihydroorotate from bicarbonate: step 2/3. In terms of biological role, catalyzes the condensation of carbamoyl phosphate and aspartate to form carbamoyl aspartate and inorganic phosphate, the committed step in the de novo pyrimidine nucleotide biosynthesis pathway. The protein is Aspartate carbamoyltransferase catalytic subunit of Dichelobacter nodosus (strain VCS1703A).